The chain runs to 514 residues: Alanine--glyoxylate aminotransferase 2, mitochondrial (514 aa).

The N-terminal 41 residues, 1 to 41, are a transit peptide targeting the mitochondrion; it reads MTLIWRHLLRPLCLVTSAPRILEMHPFLSLGTSRTSVTKLS. Lysine 71 bears the N6-acetyllysine; alternate mark. Lysine 71 carries the post-translational modification N6-succinyllysine; alternate. Lysine 84 carries the post-translational modification N6-acetyllysine. Lysine 262 bears the N6-acetyllysine; alternate mark. Lysine 262 bears the N6-succinyllysine; alternate mark. Residue lysine 304 is modified to N6-succinyllysine. Lysine 350 bears the N6-(pyridoxal phosphate)lysine mark. Lysine 417 and lysine 420 each carry N6-acetyllysine; alternate. An N6-succinyllysine; alternate mark is found at lysine 417 and lysine 420.

Belongs to the class-III pyridoxal-phosphate-dependent aminotransferase family. In terms of assembly, homotetramer. The cofactor is pyridoxal 5'-phosphate. As to expression, expressed in the convoluted tubule in the kidney and in the liver hepatocytes (at protein level).

The protein localises to the mitochondrion. The enzyme catalyses glyoxylate + L-alanine = glycine + pyruvate. It carries out the reaction (R)-3-amino-2-methylpropanoate + pyruvate = 2-methyl-3-oxopropanoate + L-alanine. The catalysed reaction is 3-oxopropanoate + L-alanine = beta-alanine + pyruvate. It catalyses the reaction 2-oxobutanoate + L-alanine = (2S)-2-aminobutanoate + pyruvate. The enzyme catalyses N(omega),N(omega)-dimethyl-L-arginine + pyruvate = 5-(3,3-dimethylguanidino)-2-oxopentanoate + L-alanine. It carries out the reaction N(omega),N('omega)-dimethyl-L-arginine + pyruvate = 5-(3,3'-dimethylguanidino)-2-oxopentanoate + L-alanine. The catalysed reaction is N(omega),N(omega)-dimethyl-L-arginine + glyoxylate = 5-(3,3-dimethylguanidino)-2-oxopentanoate + glycine. It catalyses the reaction N(omega),N('omega)-dimethyl-L-arginine + glyoxylate = 5-(3,3'-dimethylguanidino)-2-oxopentanoate + glycine. The enzyme catalyses N(omega)-methyl-L-arginine + pyruvate = 5-(3-methylguanidino)-2-oxopentanoate + L-alanine. It carries out the reaction N(omega)-methyl-L-arginine + glyoxylate = 5-(3-methylguanidino)-2-oxopentanoate + glycine. The catalysed reaction is L-ornithine + pyruvate = 5-amino-2-oxopentanoate + L-alanine. It catalyses the reaction L-ornithine + glyoxylate = 5-amino-2-oxopentanoate + glycine. The enzyme catalyses (2S)-2-aminobutanoate + glyoxylate = 2-oxobutanoate + glycine. It carries out the reaction N(omega),N(omega)-dimethyl-L-arginine + oxaloacetate = 5-(3,3-dimethylguanidino)-2-oxopentanoate + L-aspartate. The catalysed reaction is oxaloacetate + L-alanine = L-aspartate + pyruvate. It catalyses the reaction N(omega),N(omega)-dimethyl-L-arginine + 2-oxobutanoate = 5-(3,3-dimethylguanidino)-2-oxopentanoate + (2S)-2-aminobutanoate. The enzyme catalyses 2-oxopentanoate + N(omega),N(omega)-dimethyl-L-arginine = 5-(3,3-dimethylguanidino)-2-oxopentanoate + L-2-aminopentanoate. It carries out the reaction 2-oxohexanoate + N(omega),N(omega)-dimethyl-L-arginine = L-2-aminohexanoate + 5-(3,3-dimethylguanidino)-2-oxopentanoate. Functionally, multifunctional aminotransferase with a broad substrate specificity. Catalyzes the conversion of glyoxylate to glycine using alanine as the amino donor. Catalyzes metabolism of not L- but the D-isomer of D-beta-aminoisobutyric acid to generate 2-methyl-3-oxopropanoate and alanine. Catalyzes the transfer of the amino group from beta-alanine to pyruvate to yield L-alanine and 3-oxopropanoate. Can metabolize NG-monomethyl-L-arginine (NMMA), asymmetric NG,NG-dimethyl-L-arginine (ADMA) and symmetric NG,N'G-dimethyl-L-arginine (SDMA). ADMA is a potent inhibitor of nitric-oxide (NO) synthase, and this activity provides mechanism through which the kidney regulates blood pressure. This Homo sapiens (Human) protein is Alanine--glyoxylate aminotransferase 2, mitochondrial (AGXT2).